The sequence spans 211 residues: Potassium-transporting ATPase KdpC subunit (211 aa).

The chain crosses the membrane as a helical span at residues 13-35 (VVTMVLTGLLYPLAVTGLAQLLF).

The protein belongs to the KdpC family. The system is composed of three essential subunits: KdpA, KdpB and KdpC.

Its subcellular location is the cell inner membrane. Functionally, part of the high-affinity ATP-driven potassium transport (or Kdp) system, which catalyzes the hydrolysis of ATP coupled with the electrogenic transport of potassium into the cytoplasm. This subunit acts as a catalytic chaperone that increases the ATP-binding affinity of the ATP-hydrolyzing subunit KdpB by the formation of a transient KdpB/KdpC/ATP ternary complex. This Myxococcus xanthus (strain DK1622) protein is Potassium-transporting ATPase KdpC subunit.